A 188-amino-acid chain; its full sequence is dCTP deaminase (188 aa).

Residues 111 to 116, 135 to 137, Gln-156, Tyr-170, and Gln-180 each bind dCTP; these read KSTYAR and TLE. Catalysis depends on Glu-137, which acts as the Proton donor/acceptor.

This sequence belongs to the dCTP deaminase family. In terms of assembly, homotrimer.

The enzyme catalyses dCTP + H2O + H(+) = dUTP + NH4(+). Its pathway is pyrimidine metabolism; dUMP biosynthesis; dUMP from dCTP (dUTP route): step 1/2. In terms of biological role, catalyzes the deamination of dCTP to dUTP. This is dCTP deaminase from Janthinobacterium sp. (strain Marseille) (Minibacterium massiliensis).